Here is a 238-residue protein sequence, read N- to C-terminus: tRNA (guanine-N(7)-)-methyltransferase (238 aa).

S-adenosyl-L-methionine is bound by residues E68, E93, D120, and D143. D143 is an active-site residue. Residues K147, D179, and T216–E219 contribute to the substrate site.

This sequence belongs to the class I-like SAM-binding methyltransferase superfamily. TrmB family.

It carries out the reaction guanosine(46) in tRNA + S-adenosyl-L-methionine = N(7)-methylguanosine(46) in tRNA + S-adenosyl-L-homocysteine. The protein operates within tRNA modification; N(7)-methylguanine-tRNA biosynthesis. Functionally, catalyzes the formation of N(7)-methylguanine at position 46 (m7G46) in tRNA. This is tRNA (guanine-N(7)-)-methyltransferase from Shewanella woodyi (strain ATCC 51908 / MS32).